Here is a 105-residue protein sequence, read N- to C-terminus: Synaptic plasticity regulator PANTS (105 aa).

This sequence belongs to the UPF0545 family. In terms of assembly, interacts with RTN4 isoform A/Nogo-A; the interaction results in enhanced RTN4-mediated inhibition of AMPA receptor clustering. Also interacts with NCAM1, RANBP2 and CCT8. In terms of processing, rapidly degraded by proteolysis following neuronal stimulation, resulting in increased AMPA receptor clustering.

Its subcellular location is the synapse. The protein localises to the synaptic cleft. In terms of biological role, negatively regulates long-term potentiation and modulates adult synaptic plasticity. Stabilizes the interaction of RTN4 isoform A/Nogo-A with its receptors, inhibiting clustering of postsynaptic AMPA receptors at synaptic sites. Upon neuronal stimulation, degraded at synapses, reducing RTN4 signaling and allowing AMPA receptor clustering at individual synapses. This chain is Synaptic plasticity regulator PANTS (C22orf39), found in Homo sapiens (Human).